A 182-amino-acid chain; its full sequence is Large ribosomal subunit protein uL6 (182 aa).

This sequence belongs to the universal ribosomal protein uL6 family. Part of the 50S ribosomal subunit.

In terms of biological role, this protein binds to the 23S rRNA, and is important in its secondary structure. It is located near the subunit interface in the base of the L7/L12 stalk, and near the tRNA binding site of the peptidyltransferase center. The sequence is that of Large ribosomal subunit protein uL6 from Methanococcus maripaludis (strain C6 / ATCC BAA-1332).